Here is a 384-residue protein sequence, read N- to C-terminus: MDQDAFILKEDSEVEREAPGGRESLSDVIGFLDAVLSSEPTDIGGDRSWLHNTINTPQGPGSAHRAKSEGEGEVSTPSTQDNRSGEESRVSGRTSKPEAEAHAGNLDKQNIHRAFGGRTGTNSVSQDLGDGGDSGILENPPNERGYPRSGIEDENREMAAHPDKRGEDQAEGLPEEVRGGTSLPDEGEGGASNNGRSMEPGSSHSARVTGVLVIPSPELEEAVLRRNKRRPTNSGSKPLTPATVPGTRSPPLNRYNSTGSPPGKPPSTQDEHINSGDTPAVRVKDRKPPIGTRSVSDCPANGRPIHPGLETDSTKKGHRREHIIYERDGYIVDESWCNPVCSRIRVIPRRELCVCKTCPKVCKLCRDDIQCMRPDPFCREIFRS.

Disordered stretches follow at residues 1-23 (MDQD…GGRE) and 38-317 (SEPT…TKKG). The span at 7-20 (ILKEDSEVEREAPG) shows a compositional bias: basic and acidic residues. Residues 50-59 (LHNTINTPQG) show a composition bias toward polar residues. A Phosphoserine; by host modification is found at Ser-68. The span at 83–101 (RSGEESRVSGRTSKPEAEA) shows a compositional bias: basic and acidic residues. The residue at position 125 (Ser-125) is a Phosphoserine; by host. Over residues 150–168 (GIEDENREMAAHPDKRGED) the composition is skewed to basic and acidic residues. Polar residues predominate over residues 191–206 (ASNNGRSMEPGSSHSA). Phosphoserine; by host occurs at positions 192, 249, 257, and 260. Positions 318, 337, 341, 353, 355, 358, 362, and 365 each coordinate Zn(2+).

This sequence belongs to the paramyxoviruses V protein family. In terms of assembly, interacts with host IFIH1/MDA5 and DHX58/LGP2. Interacts with host IRF3. Interacts with host RIGI regulatory protein (via CARDs domain) and host TRIM25 (via SPRY domain); these interactions prevent TRIM25-mediated ubiquitination of RIG-I and disrupts downstream RIG-I signaling.

The protein localises to the host cytoplasm. Functionally, plays an essential role in the inhibition of host immune response. Prevents the establishment of cellular antiviral state by blocking interferon-alpha/beta (IFN-alpha/beta) production and signaling pathway. Interacts with host IFIH1/MDA5 and DHX58/LGP2 to inhibit the transduction pathway involved in the activation of IFN-beta promoter, thus protecting the virus against cell antiviral state. Also interacts with and inhibits host IRF3. Blocks the type I interferon signaling pathway by disrupting the RIG-I signaling pathway. This is Protein V (P/V/C) from Sendai virus (strain Fushimi) (SeV).